The primary structure comprises 189 residues: GMP synthase [glutamine-hydrolyzing] subunit A (189 aa).

Residues 1 to 189 enclose the Glutamine amidotransferase type-1 domain; it reads MIVILNNGGQ…CKKCGFGFEE (189 aa). The active-site Nucleophile is the Cys76. Residues His163 and Glu165 contribute to the active site.

In terms of assembly, heterodimer composed of a glutamine amidotransferase subunit (A) and a GMP-binding subunit (B).

The catalysed reaction is XMP + L-glutamine + ATP + H2O = GMP + L-glutamate + AMP + diphosphate + 2 H(+). It functions in the pathway purine metabolism; GMP biosynthesis; GMP from XMP (L-Gln route): step 1/1. Catalyzes the synthesis of GMP from XMP. The polypeptide is GMP synthase [glutamine-hydrolyzing] subunit A (Methanococcus maripaludis (strain DSM 14266 / JCM 13030 / NBRC 101832 / S2 / LL)).